The following is an 883-amino-acid chain: Valine--tRNA ligase (883 aa).

The 'HIGH' region motif lies at 46–56 (PNVTGKLHLGH). The 'KMSKS' region motif lies at 520–524 (KMSKS). An ATP-binding site is contributed by lysine 523. The stretch at 809 to 883 (LADLLNVEEE…RIDEMKKLVK (75 aa)) forms a coiled coil.

This sequence belongs to the class-I aminoacyl-tRNA synthetase family. ValS type 1 subfamily. As to quaternary structure, monomer.

It localises to the cytoplasm. It carries out the reaction tRNA(Val) + L-valine + ATP = L-valyl-tRNA(Val) + AMP + diphosphate. Catalyzes the attachment of valine to tRNA(Val). As ValRS can inadvertently accommodate and process structurally similar amino acids such as threonine, to avoid such errors, it has a 'posttransfer' editing activity that hydrolyzes mischarged Thr-tRNA(Val) in a tRNA-dependent manner. The polypeptide is Valine--tRNA ligase (Streptococcus pneumoniae serotype 4 (strain ATCC BAA-334 / TIGR4)).